We begin with the raw amino-acid sequence, 257 residues long: uncharacterized protein (257 aa).

Positions 1–22 (MGYLKRFALYISVMILMFAIAG) are cleaved as a signal peptide. Cys23 is lipidated: N-palmitoyl cysteine. The S-diacylglycerol cysteine moiety is linked to residue Cys23.

It belongs to the staphylococcal tandem lipoprotein family.

The protein localises to the cell membrane. This is an uncharacterized protein from Staphylococcus aureus (strain MRSA252).